We begin with the raw amino-acid sequence, 343 residues long: Holliday junction branch migration complex subunit RuvB (343 aa).

The tract at residues methionine 1 to tyrosine 181 is large ATPase domain (RuvB-L). Residues isoleucine 20, arginine 21, glycine 62, lysine 65, threonine 66, threonine 67, glutamate 128 to phenylalanine 130, arginine 171, tyrosine 181, and arginine 218 contribute to the ATP site. Threonine 66 is a binding site for Mg(2+). The interval serine 182–lysine 252 is small ATPAse domain (RuvB-S). The segment at glutamine 255–phenylalanine 343 is head domain (RuvB-H). Residues arginine 291, arginine 310, and arginine 315 each coordinate DNA.

The protein belongs to the RuvB family. Homohexamer. Forms an RuvA(8)-RuvB(12)-Holliday junction (HJ) complex. HJ DNA is sandwiched between 2 RuvA tetramers; dsDNA enters through RuvA and exits via RuvB. An RuvB hexamer assembles on each DNA strand where it exits the tetramer. Each RuvB hexamer is contacted by two RuvA subunits (via domain III) on 2 adjacent RuvB subunits; this complex drives branch migration. In the full resolvosome a probable DNA-RuvA(4)-RuvB(12)-RuvC(2) complex forms which resolves the HJ.

It is found in the cytoplasm. The catalysed reaction is ATP + H2O = ADP + phosphate + H(+). Functionally, the RuvA-RuvB-RuvC complex processes Holliday junction (HJ) DNA during genetic recombination and DNA repair, while the RuvA-RuvB complex plays an important role in the rescue of blocked DNA replication forks via replication fork reversal (RFR). RuvA specifically binds to HJ cruciform DNA, conferring on it an open structure. The RuvB hexamer acts as an ATP-dependent pump, pulling dsDNA into and through the RuvAB complex. RuvB forms 2 homohexamers on either side of HJ DNA bound by 1 or 2 RuvA tetramers; 4 subunits per hexamer contact DNA at a time. Coordinated motions by a converter formed by DNA-disengaged RuvB subunits stimulates ATP hydrolysis and nucleotide exchange. Immobilization of the converter enables RuvB to convert the ATP-contained energy into a lever motion, pulling 2 nucleotides of DNA out of the RuvA tetramer per ATP hydrolyzed, thus driving DNA branch migration. The RuvB motors rotate together with the DNA substrate, which together with the progressing nucleotide cycle form the mechanistic basis for DNA recombination by continuous HJ branch migration. Branch migration allows RuvC to scan DNA until it finds its consensus sequence, where it cleaves and resolves cruciform DNA. The protein is Holliday junction branch migration complex subunit RuvB of Xylella fastidiosa (strain Temecula1 / ATCC 700964).